Here is a 34-residue protein sequence, read N- to C-terminus: MEVNILAFIATALFILIPTAFSLILYVQTASQNN.

A helical membrane pass occupies residues 5 to 25; it reads ILAFIATALFILIPTAFSLIL.

It belongs to the PsbM family. PSII is composed of 1 copy each of membrane proteins PsbA, PsbB, PsbC, PsbD, PsbE, PsbF, PsbH, PsbI, PsbJ, PsbK, PsbL, PsbM, PsbT, PsbX, PsbY, PsbZ, Psb30/Ycf12, at least 3 peripheral proteins of the oxygen-evolving complex and a large number of cofactors. It forms dimeric complexes.

It localises to the plastid. The protein localises to the chloroplast thylakoid membrane. Its function is as follows. One of the components of the core complex of photosystem II (PSII). PSII is a light-driven water:plastoquinone oxidoreductase that uses light energy to abstract electrons from H(2)O, generating O(2) and a proton gradient subsequently used for ATP formation. It consists of a core antenna complex that captures photons, and an electron transfer chain that converts photonic excitation into a charge separation. This subunit is found at the monomer-monomer interface. The sequence is that of Photosystem II reaction center protein M from Huperzia lucidula (Shining clubmoss).